The primary structure comprises 145 residues: Group IID secretory phospholipase A2 (145 aa).

The signal sequence occupies residues 1 to 20; sequence MELALLCGLVVMAGVIPIQG. 7 cysteine pairs are disulfide-bonded: Cys46/Cys138, Cys48/Cys64, Cys63/Cys118, Cys69/Cys145, Cys70/Cys111, Cys79/Cys104, and Cys97/Cys109. Residues His47, Gly49, and Gly51 each contribute to the Ca(2+) site. His67 is an active-site residue. Asp68 serves as a coordination point for Ca(2+). The N-linked (GlcNAc...) asparagine glycan is linked to Asn89. Asp112 is a catalytic residue.

This sequence belongs to the phospholipase A2 family. Ca(2+) is required as a cofactor. Highly expressed in pancreas and spleen and less abundantly in colon, thymus, placenta, small intestine, and prostate.

Its subcellular location is the secreted. It carries out the reaction a 1,2-diacyl-sn-glycero-3-phosphoethanolamine + H2O = a 1-acyl-sn-glycero-3-phosphoethanolamine + a fatty acid + H(+). The catalysed reaction is 1-hexadecanoyl-2-(9Z-octadecenoyl)-sn-glycero-3-phosphoethanolamine + H2O = 1-hexadecanoyl-sn-glycero-3-phosphoethanolamine + (9Z)-octadecenoate + H(+). It catalyses the reaction 1-hexadecanoyl-2-(9Z,12Z-octadecadienoyl)-sn-glycero-3-phosphoethanolamine + H2O = 1-hexadecanoyl-sn-glycero-3-phosphoethanolamine + (9Z,12Z)-octadecadienoate + H(+). The enzyme catalyses 1,2-dihexadecanoyl-sn-glycero-3-phospho-(1'-sn-glycerol) + H2O = 1-hexadecanoyl-sn-glycero-3-phospho-(1'-sn-glycerol) + hexadecanoate + H(+). It carries out the reaction 1-hexadecanoyl-2-(9Z-octadecenoyl)-sn-glycero-3-phospho-(1'-sn-glycerol) + H2O = 1-hexadecanoyl-sn-glycero-3-phospho-(1'-sn-glycerol) + (9Z)-octadecenoate + H(+). The catalysed reaction is a 1,2-diacyl-sn-glycero-3-phosphocholine + H2O = a 1-acyl-sn-glycero-3-phosphocholine + a fatty acid + H(+). It catalyses the reaction 1,2-dihexadecanoyl-sn-glycero-3-phosphocholine + H2O = 1-hexadecanoyl-sn-glycero-3-phosphocholine + hexadecanoate + H(+). The enzyme catalyses 1-hexadecanoyl-2-(9Z-octadecenoyl)-sn-glycero-3-phosphocholine + H2O = 1-hexadecanoyl-sn-glycero-3-phosphocholine + (9Z)-octadecenoate + H(+). It carries out the reaction 1-hexadecanoyl-2-(9Z,12Z-octadecadienoyl)-sn-glycero-3-phosphocholine + H2O = (9Z,12Z)-octadecadienoate + 1-hexadecanoyl-sn-glycero-3-phosphocholine + H(+). The catalysed reaction is 1-hexadecanoyl-2-(4Z,7Z,10Z,13Z,16Z,19Z-docosahexaenoyl)-sn-glycero-3-phosphocholine + H2O = (4Z,7Z,10Z,13Z,16Z,19Z)-docosahexaenoate + 1-hexadecanoyl-sn-glycero-3-phosphocholine + H(+). In terms of biological role, secretory calcium-dependent phospholipase A2 that primarily targets extracellular lipids, exerting anti-inflammatory and immunosuppressive functions. Hydrolyzes the ester bond of the fatty acyl group attached at sn-2 position of phospholipids (phospholipase A2 activity) with preference for phosphatidylethanolamines and phosphatidylglycerols over phosphatidylcholines. In draining lymph nodes, selectively hydrolyzes diacyl and alkenyl forms of phosphatidylethanolamines, releasing omega-3 polyunsaturated fatty acids (PUFAs) such as eicosapentaenoate and docosahexaenoate that are precursors of the anti-inflammatory lipid mediators, resolvins. During the resolution phase of acute inflammation drives docosahexaenoate-derived resolvin D1 synthesis, which suppresses dendritic cell activation and T-helper 1 immune response. May act in an autocrine and paracrine manner. Via a mechanism independent of its catalytic activity, promotes differentiation of regulatory T cells (Tregs) and participates in the maintenance of immune tolerance. May contribute to lipid remodeling of cellular membranes and generation of lipid mediators involved in pathogen clearance. Displays bactericidal activity against Gram-positive bacteria by directly hydrolyzing phospholipids of the bacterial membrane. This is Group IID secretory phospholipase A2 (PLA2G2D) from Homo sapiens (Human).